A 266-amino-acid polypeptide reads, in one-letter code: Cell wall synthesis protein Wag31 (266 aa).

A coiled-coil region spans residues 31–64 (FLDLVENELTQLIEENSDLRQRIEELDHELAAGG). Thr-77 carries the phosphothreonine modification. Residues 152-203 (TAEATVAEAQQRADAMLADAQTRSEVQSRQAQEKADALQAEAERKHSEIMGA) are a coiled coil. The tract at residues 239-266 (ELGQRGSAAPVDSNADAGGFDQFNRGNN) is disordered.

The protein belongs to the DivIVA family. In terms of assembly, forms homooligomers. Phosphorylated by PknA.

It is found in the cytoplasm. In terms of biological role, important for maintaining cell shape and cell wall integrity by localizing peptidoglycan synthesis to the cell poles. This Mycobacterium leprae (strain TN) protein is Cell wall synthesis protein Wag31 (wag31).